The following is a 51-amino-acid chain: DNA-directed RNA polymerases II, IV and V subunit 12 (51 aa).

Positions 12, 15, 29, and 32 each coordinate Zn(2+).

The protein belongs to the archaeal Rpo12/eukaryotic RPC10 RNA polymerase subunit family. As to quaternary structure, component of the RNA polymerase II, IV and V complexes. Associates with the mediator complex. Interacts with NRPD1.

It localises to the nucleus. In terms of biological role, DNA-dependent RNA polymerase catalyzes the transcription of DNA into RNA using the four ribonucleoside triphosphates as substrates. Component of RNA polymerase II which synthesizes mRNA precursors and many functional non-coding RNAs. Pol II is the central component of the basal RNA polymerase II transcription machinery. It is composed of mobile elements that move relative to each other. Component of RNA polymerases IV and V which mediate short-interfering RNAs (siRNA) accumulation and subsequent RNA-directed DNA methylation-dependent (RdDM) transcriptional gene silencing (TGS) of endogenous repeated sequences, including transposable elements. The protein is DNA-directed RNA polymerases II, IV and V subunit 12 (NRPB12) of Arabidopsis thaliana (Mouse-ear cress).